Here is an 877-residue protein sequence, read N- to C-terminus: DNA mismatch repair protein MutS (877 aa).

Residue 627–634 coordinates ATP; the sequence is GPNMAGKS.

Belongs to the DNA mismatch repair MutS family.

Its function is as follows. This protein is involved in the repair of mismatches in DNA. It is possible that it carries out the mismatch recognition step. This protein has a weak ATPase activity. The chain is DNA mismatch repair protein MutS from Dinoroseobacter shibae (strain DSM 16493 / NCIMB 14021 / DFL 12).